The primary structure comprises 123 residues: Thioredoxin H-type (123 aa).

In terms of domain architecture, Thioredoxin spans 2–119 (AATAELIPAG…IEAKLLKHSQ (118 aa)). The cysteines at positions 45 and 48 are disulfide-linked.

It belongs to the thioredoxin family. Plant H-type subfamily.

The protein localises to the cytoplasm. Functionally, participates in various redox reactions through the reversible oxidation of the active center dithiol to a disulfide. The H form is known to activate a number of cytosolic enzymes. In Brassica campestris (Field mustard), this protein is Thioredoxin H-type (PEC-2).